The primary structure comprises 358 residues: Phosphoserine aminotransferase (358 aa).

Arg41 is an L-glutamate binding site. Pyridoxal 5'-phosphate contacts are provided by residues 75–76 (AS), Trp100, Thr148, Asp167, and Gln190. Lys191 bears the N6-(pyridoxal phosphate)lysine mark. A pyridoxal 5'-phosphate-binding site is contributed by 233–234 (NT).

It belongs to the class-V pyridoxal-phosphate-dependent aminotransferase family. SerC subfamily. In terms of assembly, homodimer. Pyridoxal 5'-phosphate serves as cofactor.

The protein resides in the cytoplasm. The enzyme catalyses O-phospho-L-serine + 2-oxoglutarate = 3-phosphooxypyruvate + L-glutamate. The catalysed reaction is 4-(phosphooxy)-L-threonine + 2-oxoglutarate = (R)-3-hydroxy-2-oxo-4-phosphooxybutanoate + L-glutamate. The protein operates within amino-acid biosynthesis; L-serine biosynthesis; L-serine from 3-phospho-D-glycerate: step 2/3. It participates in cofactor biosynthesis; pyridoxine 5'-phosphate biosynthesis; pyridoxine 5'-phosphate from D-erythrose 4-phosphate: step 3/5. Its function is as follows. Catalyzes the reversible conversion of 3-phosphohydroxypyruvate to phosphoserine and of 3-hydroxy-2-oxo-4-phosphonooxybutanoate to phosphohydroxythreonine. This Campylobacter jejuni subsp. jejuni serotype O:23/36 (strain 81-176) protein is Phosphoserine aminotransferase.